Consider the following 187-residue polypeptide: Elongation factor P (187 aa).

It belongs to the elongation factor P family.

The protein resides in the cytoplasm. It participates in protein biosynthesis; polypeptide chain elongation. Its function is as follows. Involved in peptide bond synthesis. Stimulates efficient translation and peptide-bond synthesis on native or reconstituted 70S ribosomes in vitro. Probably functions indirectly by altering the affinity of the ribosome for aminoacyl-tRNA, thus increasing their reactivity as acceptors for peptidyl transferase. The sequence is that of Elongation factor P from Roseiflexus sp. (strain RS-1).